A 283-amino-acid polypeptide reads, in one-letter code: 32 kDa beta-galactoside-binding lectin (283 aa).

Galectin domains are found at residues 17 to 148 (YRSL…VHWG) and 156 to 283 (YESG…IQIQ). 217–223 (WGNEERE) provides a ligand contact to a beta-D-galactoside.

(Microbial infection) Interacts (via domain galectin 2) with goat TMEM147. Interacts (via domain galectin 1) with goat TMEM63A.

The protein localises to the membrane. Binds galactose. Exerts immunomodulatory effects on host peripheral blood mononuclear cells to down-regulate host immune response. Hemagglutinates human, dog, rabbit, chicken and mouse erythrocytes but does not hemagglutinate the erythrocytes of goat, its natural host. This chain is 32 kDa beta-galactoside-binding lectin (GAL-1), found in Haemonchus contortus (Barber pole worm).